The chain runs to 397 residues: Phosphoglycerate kinase (397 aa).

Substrate is bound by residues 26 to 28, arginine 42, 65 to 68, arginine 119, and arginine 152; these read DLN and HLGR. Residues lysine 203, glutamate 325, and 351–354 contribute to the ATP site; that span reads GGDT.

It belongs to the phosphoglycerate kinase family. In terms of assembly, monomer.

Its subcellular location is the cytoplasm. The catalysed reaction is (2R)-3-phosphoglycerate + ATP = (2R)-3-phospho-glyceroyl phosphate + ADP. The protein operates within carbohydrate degradation; glycolysis; pyruvate from D-glyceraldehyde 3-phosphate: step 2/5. The chain is Phosphoglycerate kinase from Bordetella pertussis (strain Tohama I / ATCC BAA-589 / NCTC 13251).